Here is a 313-residue protein sequence, read N- to C-terminus: tRNA-cytidine(32) 2-sulfurtransferase (313 aa).

Residues 47–52 carry the PP-loop motif motif; it reads SGGKDS. Residues cysteine 122, cysteine 125, and cysteine 213 each coordinate [4Fe-4S] cluster. Residues 288–313 form a disordered region; the sequence is PVGWQPEDDEDTEKRPPVRLDVLEIK. Residues 299-313 show a composition bias toward basic and acidic residues; that stretch reads TEKRPPVRLDVLEIK.

This sequence belongs to the TtcA family. As to quaternary structure, homodimer. Requires Mg(2+) as cofactor. [4Fe-4S] cluster serves as cofactor.

Its subcellular location is the cytoplasm. It carries out the reaction cytidine(32) in tRNA + S-sulfanyl-L-cysteinyl-[cysteine desulfurase] + AH2 + ATP = 2-thiocytidine(32) in tRNA + L-cysteinyl-[cysteine desulfurase] + A + AMP + diphosphate + H(+). The protein operates within tRNA modification. Catalyzes the ATP-dependent 2-thiolation of cytidine in position 32 of tRNA, to form 2-thiocytidine (s(2)C32). The sulfur atoms are provided by the cysteine/cysteine desulfurase (IscS) system. The polypeptide is tRNA-cytidine(32) 2-sulfurtransferase (Yersinia pseudotuberculosis serotype O:1b (strain IP 31758)).